The chain runs to 623 residues: Glutathione import ATP-binding protein GsiA (623 aa).

ABC transporter domains follow at residues 15–269 (VSGL…QTLL) and 325–564 (LRSG…RKLM). ATP contacts are provided by residues 49–56 (GESGSGKS) and 357–364 (GESGSGKS).

It belongs to the ABC transporter superfamily. Glutathione importer (TC 3.A.1.5.11) family. As to quaternary structure, the complex is composed of two ATP-binding proteins (GsiA), two transmembrane proteins (GsiC and GsiD) and a solute-binding protein (GsiB).

Its subcellular location is the cell inner membrane. The catalysed reaction is glutathione(out) + ATP + H2O = glutathione(in) + ADP + phosphate + H(+). Part of the ABC transporter complex GsiABCD involved in glutathione import. Responsible for energy coupling to the transport system. This is Glutathione import ATP-binding protein GsiA from Salmonella paratyphi A (strain ATCC 9150 / SARB42).